A 213-amino-acid chain; its full sequence is Probable nicotinate-nucleotide adenylyltransferase (213 aa).

It belongs to the NadD family.

It carries out the reaction nicotinate beta-D-ribonucleotide + ATP + H(+) = deamido-NAD(+) + diphosphate. Its pathway is cofactor biosynthesis; NAD(+) biosynthesis; deamido-NAD(+) from nicotinate D-ribonucleotide: step 1/1. Its function is as follows. Catalyzes the reversible adenylation of nicotinate mononucleotide (NaMN) to nicotinic acid adenine dinucleotide (NaAD). The sequence is that of Probable nicotinate-nucleotide adenylyltransferase from Citrobacter koseri (strain ATCC BAA-895 / CDC 4225-83 / SGSC4696).